We begin with the raw amino-acid sequence, 281 residues long: Feruloyl esterase A (281 aa).

The signal sequence occupies residues Met1 to Ala21. 3 disulfides stabilise this stretch: Cys50–Cys279, Cys112–Cys115, and Cys248–Cys255. A substrate-binding site is contributed by Asp98. Asn100 is a glycosylation site (N-linked (GlcNAc...) asparagine). Residue Tyr101 coordinates substrate. The active-site Nucleophile is the Ser154. The active-site Charge relay system is the Asp215. His268 is a substrate binding site. His268 serves as the catalytic Charge relay system.

Glycosylated.

Its subcellular location is the secreted. The enzyme catalyses feruloyl-polysaccharide + H2O = ferulate + polysaccharide.. With respect to regulation, inhibited by the specific serine esterase inhibitor diisopropylfluorophosphate. Functionally, involved in degradation of plant cell walls. Hydrolyzes the feruloyl-arabinose ester bond in arabinoxylans, and the feruloyl-galactose ester bond in pectin. Binds to cellulose. This is Feruloyl esterase A (faeA) from Aspergillus niger.